Here is a 209-residue protein sequence, read N- to C-terminus: Cytidylyl-2-hydroxypropylphosphonate hydrolase (209 aa).

A divalent metal cation is bound by residues N111, D127, E129, and D131. The Proton donor role is filled by K144. D145 is a binding site for a divalent metal cation.

This sequence belongs to the FomD family. In terms of assembly, monomer in solution. The cofactor is Mn(2+). It depends on Co(2+) as a cofactor.

It carries out the reaction cytidine 5'-({hydroxy[(S)-2-hydroxypropyl]phosphonoyl}phosphate) + H2O = (S)-2-hydroxypropylphosphonate + CMP + H(+). It functions in the pathway antibiotic biosynthesis; fosfomycin biosynthesis. With respect to regulation, hydrolysis of (S)-HPP-CMP is inhibited by CDP. In terms of biological role, involved in fosfomycin biosynthesis. Catalyzes the hydrolysis of cytidylyl (S)-2-hydroxypropylphosphonate ((S)-HPP-CMP) to give (S)-2-hydroxypropylphosphonate ((S)-HPP) and CMP. Can also hydrolyze (R)-HPP-CMP and cytidylyl 2-hydroxyethylphosphonate (HEP-CMP), which is a biosynthetic intermediate before C-methylation, but the catalytic efficiency is much higher with (S)-HPP-CMP. The chain is Cytidylyl-2-hydroxypropylphosphonate hydrolase from Streptomyces wedmorensis.